The following is a 229-amino-acid chain: UPF0319 protein Sbal223_2728 (229 aa).

Positions Met-1–Ala-21 are cleaved as a signal peptide.

The protein belongs to the UPF0319 family.

The polypeptide is UPF0319 protein Sbal223_2728 (Shewanella baltica (strain OS223)).